A 282-amino-acid polypeptide reads, in one-letter code: Elongation factor Ts (282 aa).

The interval threonine 80 to valine 83 is involved in Mg(2+) ion dislocation from EF-Tu.

This sequence belongs to the EF-Ts family.

The protein localises to the cytoplasm. In terms of biological role, associates with the EF-Tu.GDP complex and induces the exchange of GDP to GTP. It remains bound to the aminoacyl-tRNA.EF-Tu.GTP complex up to the GTP hydrolysis stage on the ribosome. This Chlamydia muridarum (strain MoPn / Nigg) protein is Elongation factor Ts (tsf).